Here is a 189-residue protein sequence, read N- to C-terminus: UPF0251 protein MTH_1178 (189 aa).

Belongs to the UPF0251 family.

The chain is UPF0251 protein MTH_1178 from Methanothermobacter thermautotrophicus (strain ATCC 29096 / DSM 1053 / JCM 10044 / NBRC 100330 / Delta H) (Methanobacterium thermoautotrophicum).